Consider the following 383-residue polypeptide: La protein homolog (383 aa).

A disordered region spans residues 1-43; sequence MTEVEAKATATEETTKEEEEAPETTAEQTEESAQETSENVSKL. Over residues 15–33 the composition is skewed to acidic residues; that stretch reads TKEEEEAPETTAEQTEESA. The 93-residue stretch at 37-129 folds into the HTH La-type RNA-binding domain; it reads SENVSKLEAS…RRHPERPLPE (93 aa). The region spanning 141–228 is the RRM domain; the sequence is RTVYVKGFAP…RKMQDDYFEE (88 aa). A xRRM domain is found at 249–368; sequence HLPKGASVHL…RTPEGRQASR (120 aa). Residues 343–383 form a disordered region; that stretch reads KDQQARRQASNARNKGRTPEGRQASRPPQEWRRKAKGGRGE.

It localises to the nucleus. It is found in the cytoplasm. In terms of biological role, may be involved in transcription termination by RNA polymerase III. Binds RNA and DNA. Binds to the 3' end of the minus strand of Sindbis virus RNA. This may be significant for Sindbis virus RNA replication. This is La protein homolog from Aedes albopictus (Asian tiger mosquito).